A 1059-amino-acid chain; its full sequence is Translation initiation factor IF-2 (1059 aa).

2 stretches are compositionally biased toward polar residues: residues 55–75 and 107–126; these read LPHSPSLSAAPEKSNSQNQDS and KINNNLVTTPPNTSVLNNQV. Disordered regions lie at residues 55–81, 93–394, and 418–468; these read LPHSPSLSAAPEKSNSQNQDSGIGYNE, PKPL…RLRL, and SLSL…QSAE. The segment covering 178 to 187 has biased composition (basic and acidic residues); the sequence is DSNEKSKVEV. The segment covering 202 to 211 has biased composition (polar residues); the sequence is LNRNLRNTGV. The span at 216 to 229 shows a compositional bias: basic residues; that stretch reads QKNKKPKQEGKKRK. 2 stretches are compositionally biased toward basic and acidic residues: residues 230-252 and 259-273; these read DKEEKPFEKPAIVSKKENKDTSI and SKKENKDTFQNRESV. A compositionally biased stretch (polar residues) spans 274–284; it reads KTSASDTSSQL. 2 stretches are compositionally biased toward basic and acidic residues: residues 291–300 and 359–368; these read KPTVKLKQEQ and LTKDKKVSKW. Residues 452–463 are compositionally biased toward low complexity; sequence SHESVQSESNEQ. The tr-type G domain maps to 556–733; the sequence is RRPPVVTIMG…EVEDLQANPE (178 aa). A G1 region spans residues 565-572; that stretch reads GHVDHGKT. A GTP-binding site is contributed by 565-572; the sequence is GHVDHGKT. A G2 region spans residues 590-594; the sequence is GITQH. Residues 615 to 618 form a G3 region; it reads DTPG. Residues 615–619 and 669–672 contribute to the GTP site; these read DTPGH and NKID. Residues 669-672 are G4; it reads NKID. Residues 705–707 form a G5 region; sequence SAI.

It belongs to the TRAFAC class translation factor GTPase superfamily. Classic translation factor GTPase family. IF-2 subfamily.

Its subcellular location is the cytoplasm. In terms of biological role, one of the essential components for the initiation of protein synthesis. Protects formylmethionyl-tRNA from spontaneous hydrolysis and promotes its binding to the 30S ribosomal subunits. Also involved in the hydrolysis of GTP during the formation of the 70S ribosomal complex. This chain is Translation initiation factor IF-2, found in Trichodesmium erythraeum (strain IMS101).